Consider the following 255-residue polypeptide: Triosephosphate isomerase (255 aa).

9 to 11 (NWK) serves as a coordination point for substrate. The active-site Electrophile is H96. E168 serves as the catalytic Proton acceptor. The substrate site is built by G174 and S213.

The protein belongs to the triosephosphate isomerase family. As to quaternary structure, homodimer.

It localises to the cytoplasm. It catalyses the reaction D-glyceraldehyde 3-phosphate = dihydroxyacetone phosphate. Its pathway is carbohydrate biosynthesis; gluconeogenesis. The protein operates within carbohydrate degradation; glycolysis; D-glyceraldehyde 3-phosphate from glycerone phosphate: step 1/1. Its function is as follows. Involved in the gluconeogenesis. Catalyzes stereospecifically the conversion of dihydroxyacetone phosphate (DHAP) to D-glyceraldehyde-3-phosphate (G3P). The polypeptide is Triosephosphate isomerase (Buchnera aphidicola subsp. Acyrthosiphon pisum (strain APS) (Acyrthosiphon pisum symbiotic bacterium)).